Reading from the N-terminus, the 2382-residue chain is Highly reducing polyketide synthase srdA (2382 aa).

The segment at 1–25 (MAPHSTLDSDYSSGSSTPTSASAAG) is disordered. The Ketosynthase family 3 (KS3) domain maps to 44 to 474 (QEPIAIIGMG…GANAHAILEA (431 aa)). Active-site for beta-ketoacyl synthase activity residues include C217, H352, and H390. The malonyl-CoA:ACP transacylase (MAT) domain stretch occupies residues 580–891 (VFTGQGAQWP…HYGSALSRGK (312 aa)). Residue S672 is the For malonyltransferase activity of the active site. The segment at 971–1108 (HDLLGSQVHG…GLVKIDSAPA (138 aa)) is N-terminal hotdog fold. A dehydratase (DH) domain region spans residues 971–1274 (HDLLGSQVHG…RQVSYQSGIQ (304 aa)). Residues 971–1275 (HDLLGSQVHG…QVSYQSGIQQ (305 aa)) form the PKS/mFAS DH domain. H1003 acts as the Proton acceptor; for dehydratase activity in catalysis. The tract at residues 1121 to 1275 (MEPQAPRTWY…QVSYQSGIQQ (155 aa)) is C-terminal hotdog fold. Catalysis depends on D1189, which acts as the Proton donor; for dehydratase activity. The segment at 1668–1979 (GQIDSIFFRR…AKGHSGSVVV (312 aa)) is enoyl reductase (ER) domain. A ketoreductase (KR) domain region spans residues 2004-2180 (SYLLVGCLGG…ATSIGLGMIS (177 aa)). In terms of domain architecture, Carrier spans 2298 to 2376 (SVEDAVLKMI…LLSELITKKM (79 aa)). S2335 bears the O-(pantetheine 4'-phosphoryl)serine mark.

Its function is as follows. Highly reducing polyketide synthase; part of the gene cluster that mediates the biosynthesis of sordarial, a salicylic aldehyde structurally related to the phytotoxin pyriculol. The most interesting aspect of this pathway is formation of an aromatic product from the highly reducing polyketide synthase srdA. SrdA synthesizes a reduced polyketide chain from one molecule of acetyl-CoA and five molecules of malonyl-CoA. The polyketide chain is then reductively released as an aldehyde. The oxidoreductases srdC, srdD and srdE then oxidize one of the hydroxy groups to facilitate the intramolecular aldol condensation, followed by dehydration to yield a salicylic aldehyde. This aldehyde can undergo facile reduction by endogenous reductases to yield the alcohol 1-hydroxy-2-hydroxymethyl-3-pent-1,3-dienylbenzene. The flavin-dependent srdI counteract against the propensity of the aldehydes to be reduced under physiological conditions and is responsible for reoxidizing 1-hydroxy-2-hydroxymethyl-3-pent-1,3-dienylbenzene back to the salicylic aldehyde. This salicylic aldehyde is then selectively epoxidized by the cupin-domain-containing oxidoreductase srdB to yield the epoxide, which can be hydrolyzed stereoselectively by the hydrolase srdG to give the final product sordarial. The chain is Highly reducing polyketide synthase srdA from Neurospora crassa (strain ATCC 24698 / 74-OR23-1A / CBS 708.71 / DSM 1257 / FGSC 987).